A 226-amino-acid chain; its full sequence is 7-cyano-7-deazaguanine synthase (226 aa).

7-17 (ISGGMDSLVTT) lines the ATP pocket. Cysteine 187, cysteine 195, cysteine 198, and cysteine 201 together coordinate Zn(2+).

It belongs to the QueC family. It depends on Zn(2+) as a cofactor.

It carries out the reaction 7-carboxy-7-deazaguanine + NH4(+) + ATP = 7-cyano-7-deazaguanine + ADP + phosphate + H2O + H(+). It participates in purine metabolism; 7-cyano-7-deazaguanine biosynthesis. Catalyzes the ATP-dependent conversion of 7-carboxy-7-deazaguanine (CDG) to 7-cyano-7-deazaguanine (preQ(0)). In Chlorobium limicola (strain DSM 245 / NBRC 103803 / 6330), this protein is 7-cyano-7-deazaguanine synthase.